The chain runs to 377 residues: Queuine tRNA-ribosyltransferase (377 aa).

The Proton acceptor role is filled by D89. Substrate is bound by residues 89–93 (DSGGF), D143, Q187, and G214. An RNA binding region spans residues 245–251 (GVGKPED). The active-site Nucleophile is the D264. Residues 269–273 (TRNAR) are RNA binding; important for wobble base 34 recognition. C302, C304, C307, and H333 together coordinate Zn(2+).

The protein belongs to the queuine tRNA-ribosyltransferase family. Homodimer. Within each dimer, one monomer is responsible for RNA recognition and catalysis, while the other monomer binds to the replacement base PreQ1. Requires Zn(2+) as cofactor.

It catalyses the reaction 7-aminomethyl-7-carbaguanine + guanosine(34) in tRNA = 7-aminomethyl-7-carbaguanosine(34) in tRNA + guanine. Its pathway is tRNA modification; tRNA-queuosine biosynthesis. Functionally, catalyzes the base-exchange of a guanine (G) residue with the queuine precursor 7-aminomethyl-7-deazaguanine (PreQ1) at position 34 (anticodon wobble position) in tRNAs with GU(N) anticodons (tRNA-Asp, -Asn, -His and -Tyr). Catalysis occurs through a double-displacement mechanism. The nucleophile active site attacks the C1' of nucleotide 34 to detach the guanine base from the RNA, forming a covalent enzyme-RNA intermediate. The proton acceptor active site deprotonates the incoming PreQ1, allowing a nucleophilic attack on the C1' of the ribose to form the product. After dissociation, two additional enzymatic reactions on the tRNA convert PreQ1 to queuine (Q), resulting in the hypermodified nucleoside queuosine (7-(((4,5-cis-dihydroxy-2-cyclopenten-1-yl)amino)methyl)-7-deazaguanosine). The chain is Queuine tRNA-ribosyltransferase from Shewanella piezotolerans (strain WP3 / JCM 13877).